Consider the following 273-residue polypeptide: Ribosomal RNA small subunit methyltransferase A (273 aa).

S-adenosyl-L-methionine contacts are provided by Asn-18, Leu-20, Gly-45, Glu-66, Asp-91, and Asn-113.

This sequence belongs to the class I-like SAM-binding methyltransferase superfamily. rRNA adenine N(6)-methyltransferase family. RsmA subfamily.

It is found in the cytoplasm. The enzyme catalyses adenosine(1518)/adenosine(1519) in 16S rRNA + 4 S-adenosyl-L-methionine = N(6)-dimethyladenosine(1518)/N(6)-dimethyladenosine(1519) in 16S rRNA + 4 S-adenosyl-L-homocysteine + 4 H(+). Its function is as follows. Specifically dimethylates two adjacent adenosines (A1518 and A1519) in the loop of a conserved hairpin near the 3'-end of 16S rRNA in the 30S particle. May play a critical role in biogenesis of 30S subunits. The sequence is that of Ribosomal RNA small subunit methyltransferase A from Salmonella choleraesuis (strain SC-B67).